The chain runs to 572 residues: uncharacterized protein (572 aa).

The tract at residues 543-572 is disordered; it reads AYKKSSNTNSTTNSMNPRRSTVSSEDWVLN. Residues 547 to 563 show a composition bias toward low complexity; it reads SSNTNSTTNSMNPRRST.

This is an uncharacterized protein from Acanthamoeba polyphaga (Amoeba).